Reading from the N-terminus, the 474-residue chain is tRNA-2-methylthio-N(6)-dimethylallyladenosine synthase (474 aa).

An MTTase N-terminal domain is found at lysine 3 to glycine 120. The [4Fe-4S] cluster site is built by cysteine 12, cysteine 49, cysteine 83, cysteine 157, cysteine 161, and cysteine 164. Residues arginine 143–alanine 375 enclose the Radical SAM core domain. A TRAM domain is found at arginine 378 to arginine 441.

The protein belongs to the methylthiotransferase family. MiaB subfamily. In terms of assembly, monomer. The cofactor is [4Fe-4S] cluster.

Its subcellular location is the cytoplasm. The enzyme catalyses N(6)-dimethylallyladenosine(37) in tRNA + (sulfur carrier)-SH + AH2 + 2 S-adenosyl-L-methionine = 2-methylsulfanyl-N(6)-dimethylallyladenosine(37) in tRNA + (sulfur carrier)-H + 5'-deoxyadenosine + L-methionine + A + S-adenosyl-L-homocysteine + 2 H(+). The catalysed reaction is N(6)-dimethylallyladenosine(37) in tRNA + (sulfur carrier)-SH + AH2 + S-adenosyl-L-methionine = 2-thio-N(6)-dimethylallyladenosine(37) in tRNA + (sulfur carrier)-H + 5'-deoxyadenosine + L-methionine + A + H(+). It catalyses the reaction 2-thio-N(6)-dimethylallyladenosine(37) in tRNA + S-adenosyl-L-methionine = 2-methylsulfanyl-N(6)-dimethylallyladenosine(37) in tRNA + S-adenosyl-L-homocysteine + H(+). Functionally, catalyzes the methylthiolation of N6-(dimethylallyl)adenosine (i(6)A), leading to the formation of 2-methylthio-N6-(dimethylallyl)adenosine (ms(2)i(6)A) at position 37 in tRNAs that read codons beginning with uridine. The polypeptide is tRNA-2-methylthio-N(6)-dimethylallyladenosine synthase (Salmonella typhimurium (strain LT2 / SGSC1412 / ATCC 700720)).